The chain runs to 887 residues: Alanine--tRNA ligase (887 aa).

Residues His-564, His-568, Cys-676, and His-680 each coordinate Zn(2+).

Belongs to the class-II aminoacyl-tRNA synthetase family. Requires Zn(2+) as cofactor.

Its subcellular location is the cytoplasm. It catalyses the reaction tRNA(Ala) + L-alanine + ATP = L-alanyl-tRNA(Ala) + AMP + diphosphate. Catalyzes the attachment of alanine to tRNA(Ala) in a two-step reaction: alanine is first activated by ATP to form Ala-AMP and then transferred to the acceptor end of tRNA(Ala). Also edits incorrectly charged Ser-tRNA(Ala) and Gly-tRNA(Ala) via its editing domain. The polypeptide is Alanine--tRNA ligase (Sinorhizobium medicae (strain WSM419) (Ensifer medicae)).